A 128-amino-acid chain; its full sequence is Large ribosomal subunit protein bL12c (128 aa).

A disordered region spans residues 103–128 (QEGLGKDAAEDAKKQIEDAGGKVSLT). Over residues 106–122 (LGKDAAEDAKKQIEDAG) the composition is skewed to basic and acidic residues.

This sequence belongs to the bacterial ribosomal protein bL12 family. Homodimer. Part of the ribosomal stalk of the 50S ribosomal subunit. Forms a multimeric L10(L12)X complex, where L10 forms an elongated spine to which 2 to 4 L12 dimers bind in a sequential fashion. Binds GTP-bound translation factors.

The protein localises to the plastid. It localises to the chloroplast. In terms of biological role, forms part of the ribosomal stalk which helps the ribosome interact with GTP-bound translation factors. Is thus essential for accurate translation. This is Large ribosomal subunit protein bL12c from Thalassiosira pseudonana (Marine diatom).